The sequence spans 627 residues: Translation factor GUF1, mitochondrial (627 aa).

The N-terminal 16 residues, 1–16 (MSLAWSAGRAWSRQSY), are a transit peptide targeting the mitochondrion. In terms of domain architecture, tr-type G spans 40–221 (ERYRNFCIVA…AVIERIPHPV (182 aa)). GTP is bound by residues 49-56 (AHIDHGKS), 114-118 (DTPGH), and 168-171 (NKID).

It belongs to the TRAFAC class translation factor GTPase superfamily. Classic translation factor GTPase family. LepA subfamily.

It localises to the mitochondrion inner membrane. The enzyme catalyses GTP + H2O = GDP + phosphate + H(+). In terms of biological role, promotes mitochondrial protein synthesis. May act as a fidelity factor of the translation reaction, by catalyzing a one-codon backward translocation of tRNAs on improperly translocated ribosomes. Binds to mitochondrial ribosomes in a GTP-dependent manner. This is Translation factor GUF1, mitochondrial from Fusarium vanettenii (strain ATCC MYA-4622 / CBS 123669 / FGSC 9596 / NRRL 45880 / 77-13-4) (Fusarium solani subsp. pisi).